Consider the following 247-residue polypeptide: MKIDVIISADYIDSEALKGKIAVVIDMLRATSVITTALYNGAKKVIPVVSVEEAFEKAKELKSLGEEVLLGGERKALKIDGFDFSNSPLEYKREIVEGKNVIMSTTNGTRALNLCSKADKVIVASVLNGQAVAKYLENEEKEIVFVNSGTNGEFSSDDFMCAGYIISELCKNKEVELTDIAKTAKYVYESSEGIEEFIKDAKHYNILKNLGLEEDLKYCSTKNLIDLVFEFKNGEIKTVESGIKVKI.

Belongs to the ComB family. Mg(2+) is required as a cofactor.

It carries out the reaction (2R)-O-phospho-3-sulfolactate + H2O = (2R)-3-sulfolactate + phosphate. This chain is Probable 2-phosphosulfolactate phosphatase, found in Clostridium perfringens (strain SM101 / Type A).